The chain runs to 1938 residues: Myosin-1 (1938 aa).

The disordered stretch occupies residues 1 to 27 (MSLEHEKDPGWQYLKRSREQQLADQSR). Residues 16-27 (RSREQQLADQSR) show a composition bias toward basic and acidic residues. Residues 30–80 (DSKKNVWIPDAEEGYIEGVIKGPGPKADTVIVTAGGKDVTLKKDIVQEVNP) enclose the Myosin N-terminal SH3-like domain. In terms of domain architecture, Myosin motor spans 84 to 785 (EKTEDMSNLT…VVAHIEDLRD (702 aa)). At lysine 128 the chain carries N6,N6,N6-trimethyllysine. 177-184 (GESGAGKT) lines the ATP pocket. Actin-binding regions lie at residues 660–682 (LNKL…IPNE) and 764–778 (RIGH…GVVA). An alpha-helical tailpiece (short S2) region spans residues 846-1170 (QLKCGKMAEE…NKQLEIQQDN (325 aa)). The rodlike tail (S2 and LMM domains) stretch occupies residues 846–1938 (QLKCGKMAEE…GQVVRSATNK (1093 aa)). Positions 846 to 1938 (QLKCGKMAEE…GQVVRSATNK (1093 aa)) form a coiled coil. The segment at 919-951 (RQEVEKSLNDANDRLSEHEEKNADLEKQRRKAQ) is disordered. Residues 920-951 (QEVEKSLNDANDRLSEHEEKNADLEKQRRKAQ) show a composition bias toward basic and acidic residues. The tract at residues 1171–1938 (NKKKDSEIIK…GQVVRSATNK (768 aa)) is light meromyosin (LMM).

This sequence belongs to the TRAFAC class myosin-kinesin ATPase superfamily. Myosin family. In terms of assembly, muscle myosin is a hexameric protein that consists of 2 heavy chain subunits (MHC), 2 alkali light chain subunits (MLC) and 2 regulatory light chain subunits (MLC-2). Interacts with itr-1 (via c-terminal coiled coil domain). Found exclusively in the pharyngeal muscle.

The protein localises to the cytoplasm. It localises to the myofibril. Functionally, muscle contraction. The protein is Myosin-1 of Caenorhabditis elegans.